Reading from the N-terminus, the 421-residue chain is Proton/sodium-glutamate symport protein (421 aa).

The Cytoplasmic portion of the chain corresponds to 1–3 (MRK). A helical transmembrane segment spans residues 4–24 (IGLAWQIFIGLILGIIVGAIF). At 25 to 43 (YGNPKVAAYLQPIGDIFLR) the chain is on the extracellular side. A helical membrane pass occupies residues 44-64 (LIKMIVIPIVISSLVVGVASV). Residues 65 to 77 (GDLKKLGKLGGKT) are Cytoplasmic-facing. Residues 78–98 (IIYFEIITTIAIVVGLLAANI) form a helical membrane-spanning segment. The Extracellular portion of the chain corresponds to 99–148 (FQPGAGVNMKSLEKTDIQSYVDTTNEVQHHSMVETFVNIVPKNIFESLST). The chain crosses the membrane as a helical span at residues 149–169 (GDMLPIIFFSVMFGLGVAAIG). The Cytoplasmic portion of the chain corresponds to 170-198 (EKGKPVLQFFQGTAEAMFYVTNQIMKFAP). Residues 199–219 (FGVFALIGVTVSKFGVESLIP) form a helical membrane-spanning segment. Over 220–222 (LSK) the chain is Extracellular. Residues 223 to 243 (LVIVVYATMLFFIFAVLGGVA) form a helical membrane-spanning segment. Residue Lys244 is a topological domain, cytoplasmic. A helical membrane pass occupies residues 245 to 265 (LFGINIFHIIKILKDELILAY). Topologically, residues 266-306 (STASSETVLPRIMDKMEKFGCPKAITSFVIPTGYSFNLDGS) are extracellular. Residues 307 to 327 (TLYQALAAIFIAQLYGIDMSV) form a helical membrane-spanning segment. At 328–330 (SQQ) the chain is on the cytoplasmic side. 2 consecutive transmembrane segments (helical) span residues 331–351 (ISLL…PGVS) and 352–372 (FVVL…LAFI). The Cytoplasmic portion of the chain corresponds to 373-421 (AGIDRILDMARTAVNVIGNSLAAIIMSKWEGQYNEEKGKQYLAELQQSA).

This sequence belongs to the dicarboxylate/amino acid:cation symporter (DAACS) (TC 2.A.23) family. In terms of assembly, homotrimer.

It is found in the cell membrane. Its function is as follows. This carrier protein is part of the Na(+)-dependent, binding-protein-independent glutamate-aspartate transport system. This is Proton/sodium-glutamate symport protein (gltT) from Bacillus caldotenax.